Reading from the N-terminus, the 313-residue chain is Ribose-phosphate pyrophosphokinase (313 aa).

ATP is bound by residues 37–39 and 96–97; these read DGE and RQ. Positions 131 and 170 each coordinate Mg(2+). Residue K193 is part of the active site. D-ribose 5-phosphate contacts are provided by residues R195, D219, and 223-227; that span reads DTAGT.

Belongs to the ribose-phosphate pyrophosphokinase family. Class I subfamily. In terms of assembly, homohexamer. Mg(2+) serves as cofactor.

The protein resides in the cytoplasm. It catalyses the reaction D-ribose 5-phosphate + ATP = 5-phospho-alpha-D-ribose 1-diphosphate + AMP + H(+). Its pathway is metabolic intermediate biosynthesis; 5-phospho-alpha-D-ribose 1-diphosphate biosynthesis; 5-phospho-alpha-D-ribose 1-diphosphate from D-ribose 5-phosphate (route I): step 1/1. Functionally, involved in the biosynthesis of the central metabolite phospho-alpha-D-ribosyl-1-pyrophosphate (PRPP) via the transfer of pyrophosphoryl group from ATP to 1-hydroxyl of ribose-5-phosphate (Rib-5-P). This is Ribose-phosphate pyrophosphokinase from Pseudomonas putida (strain ATCC 47054 / DSM 6125 / CFBP 8728 / NCIMB 11950 / KT2440).